The primary structure comprises 146 residues: Monothiol glutaredoxin-5, mitochondrial (146 aa).

The Glutaredoxin domain occupies 26–131; it reads RQALEQAVKE…KILKEINALA (106 aa). Residue Lys-43 coordinates glutathione. Cys-51 serves as a coordination point for [2Fe-2S] cluster. Glutathione is bound by residues 83-87, Ile-95, and 108-109; these read REGIK and SD.

Belongs to the glutaredoxin family. Monothiol subfamily. In terms of assembly, homodimer. Interacts with ISA1 and ISA2.

Its subcellular location is the mitochondrion. Functionally, monothiol glutaredoxin involved in mitochondrial iron-sulfur (Fe/S) cluster transfer. Receives 2Fe/2S clusters from scaffold protein isu1 and mediates their transfer to apoproteins, to the 4Fe/FS cluster biosynthesis machinery, or export from mitochondrion. This Schizosaccharomyces pombe (strain 972 / ATCC 24843) (Fission yeast) protein is Monothiol glutaredoxin-5, mitochondrial.